A 467-amino-acid polypeptide reads, in one-letter code: Inactive pancreatic lipase-related protein 1 (467 aa).

The N-terminal stretch at Met-1–Gly-17 is a signal peptide. Disulfide bonds link Cys-21-Cys-27 and Cys-109-Cys-120. The Nucleophile role is filled by Ser-171. Asp-194 serves as the catalytic Charge relay system. Positions 205, 208, 210, and 213 each coordinate Ca(2+). The cysteines at positions 255 and 279 are disulfide-linked. The Charge relay system role is filled by His-281. 3 cysteine pairs are disulfide-bonded: Cys-303–Cys-314, Cys-317–Cys-322, and Cys-451–Cys-467. Positions Trp-356–Cys-467 constitute a PLAT domain.

It belongs to the AB hydrolase superfamily. Lipase family. Pancreas.

The protein localises to the secreted. Its function is as follows. May function as inhibitor of dietary triglyceride digestion. Lacks detectable lipase activity towards triglycerides, diglycerides, phosphatidylcholine, galactolipids or cholesterol esters (in vitro). This is Inactive pancreatic lipase-related protein 1 (PNLIPRP1) from Homo sapiens (Human).